The sequence spans 382 residues: MNEVYVFTSESVSEGHPDKIADQISDAILDAILAQDPKARVACEVLVKTGMVLVGGEITTKAWVDVEEITRHVIKDIGYNSSQMGFDWESCAVLSAIGKQSPDIAQGVDNQQTKILGAGDQGLMFGYASRETDVFMPAPIAYAHRLMEKLAKARKSGQLPWLRPDAKCQLTLKYEQGMPVEVDTVVFSTQHSPDIEHKDLVEAIREEIIKSVLPAEWLNDKTRYFINPTGRFVIGGPLGDCGLTGRKIIVDTYGGMARHGGGCFSGKDPSKVDRSAAYAARHVAKNIVAAGLADKCELQISYAIGVAEPTSIFVDTFGTGRLKNSEIIDLIHTHFDLTPQGIIDQHDLLRPIYRQTATYGHYGRESFPWERLDKVAELSKAL.

An ATP-binding site is contributed by His16. Residue Asp18 coordinates Mg(2+). Residue Glu44 coordinates K(+). L-methionine contacts are provided by Glu57 and Gln100. Residues 100–110 (QSPDIAQGVDN) form a flexible loop region. Residues 165–167 (DAK), 231–232 (RF), Asp240, 246–247 (RK), and Lys267 contribute to the ATP site. Asp240 contacts L-methionine. Lys271 serves as a coordination point for L-methionine.

The protein belongs to the AdoMet synthase family. As to quaternary structure, homotetramer; dimer of dimers. Mg(2+) is required as a cofactor. K(+) serves as cofactor.

The protein localises to the cytoplasm. The enzyme catalyses L-methionine + ATP + H2O = S-adenosyl-L-methionine + phosphate + diphosphate. Its pathway is amino-acid biosynthesis; S-adenosyl-L-methionine biosynthesis; S-adenosyl-L-methionine from L-methionine: step 1/1. In terms of biological role, catalyzes the formation of S-adenosylmethionine (AdoMet) from methionine and ATP. The overall synthetic reaction is composed of two sequential steps, AdoMet formation and the subsequent tripolyphosphate hydrolysis which occurs prior to release of AdoMet from the enzyme. In Legionella pneumophila subsp. pneumophila (strain Philadelphia 1 / ATCC 33152 / DSM 7513), this protein is S-adenosylmethionine synthase.